The primary structure comprises 573 residues: Excitatory amino acid transporter 2 (573 aa).

The span at 1-11 (MASTEGANNMP) shows a compositional bias: polar residues. Residues 1 to 29 (MASTEGANNMPKQVEVRMHDSHLSSEEPK) are disordered. At 1 to 44 (MASTEGANNMPKQVEVRMHDSHLSSEEPKHRNLGMRMCDKLGKN) the chain is on the cytoplasmic side. Phosphoserine is present on residues Ser3, Ser21, Ser24, and Ser25. The span at 14-29 (VEVRMHDSHLSSEEPK) shows a compositional bias: basic and acidic residues. Residue Cys38 is the site of S-palmitoyl cysteine attachment. The next 3 helical transmembrane spans lie at 45–64 (LLLS…GGLL), 88–108 (MLKM…LSGL), and 121–142 (MVYY…VLAI). 2 N-linked (GlcNAc...) asparagine glycosylation sites follow: Asn205 and Asn215. A run of 3 helical transmembrane segments spans residues 235–258 (FKDG…MGKM), 268–295 (FFNI…ACLI), and 317–338 (ITVI…YFVV). Residues 344–374 (FSFFAGIFQAWITALGTASSAGTLPVTFRCL) constitute an intramembrane region (discontinuously helical). L-aspartate is bound at residue 361–363 (ASS). Residues 384 to 410 (VTRFVLPVGATINMDGTALYEAVAAIF) form a helical membrane-spanning segment. Na(+) is bound by residues Gly392, Thr394, and Asn396. Residues Thr400, 441-445 (IPSAG), Asp474, and Asn481 contribute to the L-aspartate site. An intramembrane region (discontinuously helical) is located at residues 424-457 (IVTVSLTATLASIGAASIPSAGLVTMLLILTAVG). A helical membrane pass occupies residues 471 to 492 (WLLDRMRTSVNVVGDSFGAGIV). The Na(+) site is built by Asn481 and Asp485. A phosphoserine mark is found at Ser505, Ser520, Ser531, and Ser533. At Tyr538 the chain carries Phosphotyrosine. Phosphoserine occurs at positions 543, 559, and 563.

This sequence belongs to the dicarboxylate/amino acid:cation symporter (DAACS) (TC 2.A.23) family. SLC1A2 subfamily. Homotrimer. Interacts with AJUBA. In terms of processing, glycosylated. Palmitoylation at Cys-38 is not required for correct subcellular localization, but is important for glutamate uptake activity. Localized in brain and is highly enriched in the Purkinje cell layer in cerebellum.

It localises to the cell membrane. The enzyme catalyses K(+)(in) + L-glutamate(out) + 3 Na(+)(out) + H(+)(out) = K(+)(out) + L-glutamate(in) + 3 Na(+)(in) + H(+)(in). It carries out the reaction D-aspartate(out) + K(+)(in) + 3 Na(+)(out) + H(+)(out) = D-aspartate(in) + K(+)(out) + 3 Na(+)(in) + H(+)(in). The catalysed reaction is K(+)(in) + L-aspartate(out) + 3 Na(+)(out) + H(+)(out) = K(+)(out) + L-aspartate(in) + 3 Na(+)(in) + H(+)(in). Sodium-dependent, high-affinity amino acid transporter that mediates the uptake of L-glutamate and also L-aspartate and D-aspartate. Functions as a symporter that transports one amino acid molecule together with two or three Na(+) ions and one proton, in parallel with the counter-transport of one K(+) ion. Mediates Cl(-) flux that is not coupled to amino acid transport; this avoids the accumulation of negative charges due to aspartate and Na(+) symport. Essential for the rapid removal of released glutamate from the synaptic cleft, and for terminating the postsynaptic action of glutamate. In Rattus norvegicus (Rat), this protein is Excitatory amino acid transporter 2 (Slc1a2).